Consider the following 729-residue polypeptide: Fatty acid oxidation complex subunit alpha (729 aa).

The tract at residues 1–189 (MLYQGESLYL…KVGLVQAVVA (189 aa)) is enoyl-CoA hydratase/isomerase. Residue aspartate 296 coordinates substrate. Residues 311–729 (PVPQQAAVLG…HADVSHGQPA (419 aa)) are 3-hydroxyacyl-CoA dehydrogenase. Residues methionine 324, aspartate 343, 400–402 (VVE), lysine 407, and serine 429 contribute to the NAD(+) site. The For 3-hydroxyacyl-CoA dehydrogenase activity role is filled by histidine 450. Asparagine 453 serves as a coordination point for NAD(+). 2 residues coordinate substrate: asparagine 500 and tyrosine 660.

In the N-terminal section; belongs to the enoyl-CoA hydratase/isomerase family. It in the C-terminal section; belongs to the 3-hydroxyacyl-CoA dehydrogenase family. In terms of assembly, heterotetramer of two alpha chains (FadB) and two beta chains (FadA).

It carries out the reaction a (3S)-3-hydroxyacyl-CoA + NAD(+) = a 3-oxoacyl-CoA + NADH + H(+). The enzyme catalyses a (3S)-3-hydroxyacyl-CoA = a (2E)-enoyl-CoA + H2O. The catalysed reaction is a 4-saturated-(3S)-3-hydroxyacyl-CoA = a (3E)-enoyl-CoA + H2O. It catalyses the reaction (3S)-3-hydroxybutanoyl-CoA = (3R)-3-hydroxybutanoyl-CoA. It carries out the reaction a (3Z)-enoyl-CoA = a 4-saturated (2E)-enoyl-CoA. The enzyme catalyses a (3E)-enoyl-CoA = a 4-saturated (2E)-enoyl-CoA. It participates in lipid metabolism; fatty acid beta-oxidation. Its function is as follows. Involved in the aerobic and anaerobic degradation of long-chain fatty acids via beta-oxidation cycle. Catalyzes the formation of 3-oxoacyl-CoA from enoyl-CoA via L-3-hydroxyacyl-CoA. It can also use D-3-hydroxyacyl-CoA and cis-3-enoyl-CoA as substrate. The sequence is that of Fatty acid oxidation complex subunit alpha from Pectobacterium atrosepticum (strain SCRI 1043 / ATCC BAA-672) (Erwinia carotovora subsp. atroseptica).